A 216-amino-acid polypeptide reads, in one-letter code: DNA gyrase subunit B (216 aa).

In terms of domain architecture, Toprim spans 140-216; it reads SELFLVEGDS…PDKLRYHKIV (77 aa).

Belongs to the type II topoisomerase GyrB family. As to quaternary structure, heterotetramer, composed of two GyrA and two GyrB chains. In the heterotetramer, GyrA contains the active site tyrosine that forms a transient covalent intermediate with DNA, while GyrB binds cofactors and catalyzes ATP hydrolysis.

Its subcellular location is the cytoplasm. The enzyme catalyses ATP-dependent breakage, passage and rejoining of double-stranded DNA.. A type II topoisomerase that negatively supercoils closed circular double-stranded (ds) DNA in an ATP-dependent manner to modulate DNA topology and maintain chromosomes in an underwound state. Negative supercoiling favors strand separation, and DNA replication, transcription, recombination and repair, all of which involve strand separation. Also able to catalyze the interconversion of other topological isomers of dsDNA rings, including catenanes and knotted rings. Type II topoisomerases break and join 2 DNA strands simultaneously in an ATP-dependent manner. In Acinetobacter sp. (strain SEIP 12.81), this protein is DNA gyrase subunit B (gyrB).